A 308-amino-acid chain; its full sequence is Ribose 1,5-bisphosphate isomerase (308 aa).

Substrate contacts are provided by residues 24–27 and R67; that span reads RGAG. The active-site Proton acceptor is the C129. D198 serves as the catalytic Proton donor. Substrate-binding positions include 208–209 and K234; that span reads NK.

This sequence belongs to the eIF-2B alpha/beta/delta subunits family. R15P isomerase subfamily.

The catalysed reaction is alpha-D-ribose 1,5-bisphosphate = D-ribulose 1,5-bisphosphate. In terms of biological role, catalyzes the isomerization of ribose 1,5-bisphosphate (R15P) to ribulose 1,5-bisphosphate (RuBP), the CO(2) acceptor and substrate for RubisCO. Functions in an archaeal AMP degradation pathway, together with AMP phosphorylase and RubisCO. The polypeptide is Ribose 1,5-bisphosphate isomerase (Methanocaldococcus jannaschii (strain ATCC 43067 / DSM 2661 / JAL-1 / JCM 10045 / NBRC 100440) (Methanococcus jannaschii)).